A 93-amino-acid chain; its full sequence is uncharacterized protein (93 aa).

The protein belongs to the BolA/IbaG family.

This is an uncharacterized protein from Sinorhizobium sp.